The chain runs to 167 residues: Translation initiation factor IF-3 (167 aa).

This sequence belongs to the IF-3 family. As to quaternary structure, monomer.

The protein resides in the cytoplasm. Functionally, IF-3 binds to the 30S ribosomal subunit and shifts the equilibrium between 70S ribosomes and their 50S and 30S subunits in favor of the free subunits, thus enhancing the availability of 30S subunits on which protein synthesis initiation begins. The polypeptide is Translation initiation factor IF-3 (Bacillus cereus (strain ATCC 14579 / DSM 31 / CCUG 7414 / JCM 2152 / NBRC 15305 / NCIMB 9373 / NCTC 2599 / NRRL B-3711)).